Here is a 559-residue protein sequence, read N- to C-terminus: YTH domain-containing family protein 1 (559 aa).

Residues 1–49 are disordered; sequence MSATSVDPQRTKGQDNKVQNGSLHQKDAVHDNDFEPYLSGQSNPSNSYP. Residue serine 2 is modified to N-acetylserine. Positions 24 to 33 are enriched in basic and acidic residues; it reads HQKDAVHDND. Serine 182 is modified (phosphoserine). The tract at residues 239–365 is disordered; that stretch reads SKPAKPQPKM…PTSAPSVESH (127 aa). Composition is skewed to low complexity over residues 279 to 305 and 314 to 326; these read PAPKASAPQQTPSPQAAPQPQQVAQPL and QPQYQSPQQPLQP. Over residues 343–361 the composition is skewed to polar residues; that stretch reads GANSDSNSVGNAQPTSAPS. The region spanning 389-523 is the YTH domain; it reads GRVFIIKSYS…EKAKQVLKII (135 aa). RNA-binding positions include 395-397, aspartate 401, 411-412, asparagine 441, tryptophan 465, and tryptophan 470; these read KSY and WC.

This sequence belongs to the YTHDF family. YTHDF1 subfamily. Interacts with CNOT1; promoting recruitment of the CCR4-NOT complex. Interacts with ribosomes. Interacts with eIF3 (EIF3A or EIF3B). Interacts with YTHDF3. In terms of processing, ubiquitinated by the CUL7-FBXW8 E3 ligase complex leading to degradation. Deubiquitinated and stabilized by USP5 by removing 'Lys-11'-linked polyubiquitination. In terms of tissue distribution, in brain, preferentially expressed in the hippocampus.

The protein localises to the cytoplasm. It localises to the P-body. The protein resides in the stress granule. Functionally, specifically recognizes and binds N6-methyladenosine (m6A)-containing mRNAs, and regulates their stability. M6A is a modification present at internal sites of mRNAs and some non-coding RNAs and plays a role in mRNA stability and processing. Acts as a regulator of mRNA stability by promoting degradation of m6A-containing mRNAs via interaction with the CCR4-NOT complex. The YTHDF paralogs (YTHDF1, YTHDF2 and YTHDF3) share m6A-containing mRNAs targets and act redundantly to mediate mRNA degradation and cellular differentiation. Required to facilitate learning and memory formation in the hippocampus by binding to m6A-containing neuronal mRNAs. Acts as a regulator of axon guidance by binding to m6A-containing ROBO3 transcripts. Acts as a negative regulator of antigen cross-presentation in myeloid dendritic cells. In the context of tumorigenesis, negative regulation of antigen cross-presentation limits the anti-tumor response by reducing efficiency of tumor-antigen cross-presentation. Promotes formation of phase-separated membraneless compartments, such as P-bodies or stress granules, by undergoing liquid-liquid phase separation upon binding to mRNAs containing multiple m6A-modified residues: polymethylated mRNAs act as a multivalent scaffold for the binding of YTHDF proteins, juxtaposing their disordered regions and thereby leading to phase separation. The resulting mRNA-YTHDF complexes then partition into different endogenous phase-separated membraneless compartments, such as P-bodies, stress granules or neuronal RNA granules. The sequence is that of YTH domain-containing family protein 1 from Mus musculus (Mouse).